Consider the following 263-residue polypeptide: Fructose-bisphosphate aldolase class 1 (263 aa).

The active-site Schiff-base intermediate with dihydroxyacetone-P is lysine 177.

The protein belongs to the DeoC/FbaB aldolase family.

It catalyses the reaction beta-D-fructose 1,6-bisphosphate = D-glyceraldehyde 3-phosphate + dihydroxyacetone phosphate. Its function is as follows. Has aldolase activity with fructose 1,6-bisphosphate. May play a role in the biosynthesis of aromatic amino acids (AroAA). This is Fructose-bisphosphate aldolase class 1 (fba1) from Halobacterium salinarum (strain ATCC 29341 / DSM 671 / R1).